Reading from the N-terminus, the 396-residue chain is Ribose-phosphate pyrophosphokinase 1, chloroplastic (396 aa).

The N-terminal 36 residues, 1-36 (MPLSYSAAAAAAPSPLAARSRGLLRRPPRSSPVVVR), are a transit peptide targeting the chloroplast. Residues D204, H206, D215, and D219 each coordinate Mg(2+). The binding of phosphoribosylpyrophosphate stretch occupies residues 290–305 (GKVAVMMDDMIDTAGT).

It belongs to the ribose-phosphate pyrophosphokinase family. Requires Mg(2+) as cofactor.

Its subcellular location is the plastid. The protein resides in the chloroplast. It catalyses the reaction D-ribose 5-phosphate + ATP = 5-phospho-alpha-D-ribose 1-diphosphate + AMP + H(+). The sequence is that of Ribose-phosphate pyrophosphokinase 1, chloroplastic from Oryza sativa subsp. japonica (Rice).